A 165-amino-acid polypeptide reads, in one-letter code: ER membrane protein complex subunit 5 (165 aa).

The Cytoplasmic portion of the chain corresponds to 1 to 3; the sequence is MAP. Residues 4-22 form a helical membrane-spanning segment; sequence SLWKGLVGIGLFALAHAAF. Over 23–77 the chain is Lumenal; sequence SAAQHYFPSSGIKWKRKCEFLQSSSFQDKIFRSMYYVYDRSYMRLTEKEDESLPI. A helical membrane pass occupies residues 78–97; that stretch reads DIVLQTLLAFAVTCYGIVHI. Residues 98 to 165 are Cytoplasmic-facing; that stretch reads AGEFKDMDAT…KLRKLESLRR (68 aa). Residue S154 is modified to Phosphoserine.

It belongs to the membrane magnesium transporter (TC 1.A.67) family. In terms of assembly, component of the ER membrane protein complex (EMC).

It localises to the endoplasmic reticulum membrane. It is found in the golgi apparatus membrane. The protein localises to the early endosome membrane. Its function is as follows. Part of the endoplasmic reticulum membrane protein complex (EMC) that enables the energy-independent insertion into endoplasmic reticulum membranes of newly synthesized membrane proteins. Preferentially accommodates proteins with transmembrane domains that are weakly hydrophobic or contain destabilizing features such as charged and aromatic residues. Involved in the cotranslational insertion of multi-pass membrane proteins in which stop-transfer membrane-anchor sequences become ER membrane spanning helices. It is also required for the post-translational insertion of tail-anchored/TA proteins in endoplasmic reticulum membranes. By mediating the proper cotranslational insertion of N-terminal transmembrane domains in an N-exo topology, with translocated N-terminus in the lumen of the ER, controls the topology of multi-pass membrane proteins like the G protein-coupled receptors. By regulating the insertion of various proteins in membranes, it is indirectly involved in many cellular processes. May be involved in Mg(2+) transport. In Bos taurus (Bovine), this protein is ER membrane protein complex subunit 5.